The sequence spans 292 residues: Ribosomal protein L11 methyltransferase (292 aa).

Residues T136, G159, D181, and N228 each coordinate S-adenosyl-L-methionine.

Belongs to the methyltransferase superfamily. PrmA family.

The protein localises to the cytoplasm. The catalysed reaction is L-lysyl-[protein] + 3 S-adenosyl-L-methionine = N(6),N(6),N(6)-trimethyl-L-lysyl-[protein] + 3 S-adenosyl-L-homocysteine + 3 H(+). Methylates ribosomal protein L11. The sequence is that of Ribosomal protein L11 methyltransferase from Rhizobium rhizogenes (strain K84 / ATCC BAA-868) (Agrobacterium radiobacter).